The following is a 269-amino-acid chain: Cbp/p300-interacting transactivator 2 (269 aa).

The interval Ala142–Met200 is disordered. Residues Ser165–Ser198 show a composition bias toward gly residues.

This sequence belongs to the CITED family. As to quaternary structure, interacts (via C-terminus) with EP300 (via CH1 domain); the interaction is stimulated in response to hypoxia. Interacts with PPARA. Interacts (via C-terminus) with TFAP2A, TFAP2B and TFAP2C. Interacts (via C-terminus) with SMAD2. Interacts (via C-terminus) with SMAD3 (via MH2 domain). Interacts with LHX2 (via LIM domains). Interacts with WT1 isoform 1 and isoform 3. As to expression, ubiquitous.

The protein localises to the nucleus. In terms of biological role, transcriptional coactivator of the p300/CBP-mediated transcription complex. Acts as a bridge, linking TFAP2 transcription factors and the p300/CBP transcriptional coactivator complex in order to stimulate TFAP2-mediated transcriptional activation. Positively regulates TGF-beta signaling through its association with the SMAD/p300/CBP-mediated transcriptional coactivator complex. Stimulates the peroxisome proliferator-activated receptors PPARA transcriptional activity. Enhances estrogen-dependent transactivation mediated by estrogen receptors. Also acts as a transcriptional corepressor; interferes with the binding of the transcription factors HIF1A or STAT2 and the p300/CBP transcriptional coactivator complex. Participates in sex determination and early gonad development by stimulating transcription activation of SRY. Plays a role in controlling left-right patterning during embryogenesis; potentiates transcriptional activation of NODAL-mediated gene transcription in the left lateral plate mesoderm (LPM). Plays an essential role in differentiation of the adrenal cortex from the adrenogonadal primordium (AGP); stimulates WT1-mediated transcription activation thereby up-regulating the nuclear hormone receptor NR5A1 promoter activity. Associates with chromatin to the PITX2 P1 promoter region. This is Cbp/p300-interacting transactivator 2 (Cited2) from Mus musculus (Mouse).